The sequence spans 860 residues: Leucine--tRNA ligase (860 aa).

Positions 42 to 52 match the 'HIGH' region motif; the sequence is PYPSGRLHMGH. The 'KMSKS' region signature appears at 619–623; it reads KMSKS. K622 contacts ATP.

The protein belongs to the class-I aminoacyl-tRNA synthetase family.

The protein resides in the cytoplasm. It carries out the reaction tRNA(Leu) + L-leucine + ATP = L-leucyl-tRNA(Leu) + AMP + diphosphate. The sequence is that of Leucine--tRNA ligase from Erwinia tasmaniensis (strain DSM 17950 / CFBP 7177 / CIP 109463 / NCPPB 4357 / Et1/99).